Reading from the N-terminus, the 111-residue chain is Large ribosomal subunit protein uL22 (111 aa).

It belongs to the universal ribosomal protein uL22 family. In terms of assembly, part of the 50S ribosomal subunit.

Functionally, this protein binds specifically to 23S rRNA; its binding is stimulated by other ribosomal proteins, e.g. L4, L17, and L20. It is important during the early stages of 50S assembly. It makes multiple contacts with different domains of the 23S rRNA in the assembled 50S subunit and ribosome. Its function is as follows. The globular domain of the protein is located near the polypeptide exit tunnel on the outside of the subunit, while an extended beta-hairpin is found that lines the wall of the exit tunnel in the center of the 70S ribosome. In Polynucleobacter necessarius subsp. necessarius (strain STIR1), this protein is Large ribosomal subunit protein uL22.